A 354-amino-acid chain; its full sequence is Protein RecA (354 aa).

Residue 67-74 coordinates ATP; it reads GPESSGKT.

The protein belongs to the RecA family.

It is found in the cytoplasm. Functionally, can catalyze the hydrolysis of ATP in the presence of single-stranded DNA, the ATP-dependent uptake of single-stranded DNA by duplex DNA, and the ATP-dependent hybridization of homologous single-stranded DNAs. It interacts with LexA causing its activation and leading to its autocatalytic cleavage. This is Protein RecA from Enterobacter agglomerans (Erwinia herbicola).